A 307-amino-acid chain; its full sequence is Elongation factor Ts (307 aa).

An involved in Mg(2+) ion dislocation from EF-Tu region spans residues 80–83 (TDFV).

This sequence belongs to the EF-Ts family.

The protein resides in the cytoplasm. Associates with the EF-Tu.GDP complex and induces the exchange of GDP to GTP. It remains bound to the aminoacyl-tRNA.EF-Tu.GTP complex up to the GTP hydrolysis stage on the ribosome. This Variovorax paradoxus (strain S110) protein is Elongation factor Ts.